Here is a 202-residue protein sequence, read N- to C-terminus: Superoxide dismutase [Fe] (202 aa).

The Fe cation site is built by H27, H82, D164, and H168.

This sequence belongs to the iron/manganese superoxide dismutase family. Homodimer. The cofactor is Fe cation.

The catalysed reaction is 2 superoxide + 2 H(+) = H2O2 + O2. Functionally, destroys superoxide anion radicals which are normally produced within the cells and which are toxic to biological systems. The polypeptide is Superoxide dismutase [Fe] (sodA) (Enterococcus faecalis (strain ATCC 700802 / V583)).